The primary structure comprises 80 residues: Toxin Acra1 (80 aa).

The signal sequence occupies residues 1–22; that stretch reads MMKLVLFSIIVILFSLIGSIHG. The region spanning 25–80 is the LCN-type CS-alpha/beta domain; the sequence is VPGNYPLDSSGNKYPCTVLGDNQSCIDVCKKHGVKYGYCYSFKCWCEFLEDKNVSI. 3 disulfides stabilise this stretch: Cys40–Cys63, Cys49–Cys68, and Cys53–Cys70.

In terms of tissue distribution, expressed by the venom gland.

It localises to the secreted. Functionally, probable neurotoxin that inhibits ion channels. Is toxic to mice. Is about 2.8% of the total protein in the venom. This is Toxin Acra1 from Androctonus crassicauda (Arabian fat-tailed scorpion).